The chain runs to 436 residues: Acrosin (436 aa).

The signal sequence occupies residues 1–19 (MVEMLPTVAVLVLAVSVVA). An N-linked (GlcNAc...) asparagine glycan is attached at N22. 6 cysteine pairs are disulfide-bonded: C25–C155, C29–C163, C74–C90, C178–C247, C210–C226, and C237–C267. A Peptidase S1 domain is found at 43–291 (IVSGQSAQLG…YLDWIASKIG (249 aa)). Catalysis depends on charge relay system residues H89 and D143. N-linked (GlcNAc...) asparagine glycosylation is present at N211. S241 (charge relay system) is an active-site residue. Positions 346 to 436 (PSSTQTSSSL…NKPSEPFLHS (91 aa)) are cleaved as a propeptide — pro-rich.

The protein belongs to the peptidase S1 family. In terms of assembly, heavy chain (catalytic) and a light chain linked by two disulfide bonds. Forms a heterodimer with SERPINA5.

The enzyme catalyses Preferential cleavage: Arg-|-Xaa, Lys-|-Xaa.. Its activity is regulated as follows. Inhibited by SERPINA5. Its function is as follows. Acrosin is the major protease of mammalian spermatozoa. It is a serine protease of trypsin-like cleavage specificity, it is synthesized in a zymogen form, proacrosin and stored in the acrosome. In Mus musculus (Mouse), this protein is Acrosin (Acr).